The chain runs to 129 residues: Small ribosomal subunit protein uS11 (129 aa).

It belongs to the universal ribosomal protein uS11 family. Part of the 30S ribosomal subunit. Interacts with proteins S7 and S18. Binds to IF-3.

Its function is as follows. Located on the platform of the 30S subunit, it bridges several disparate RNA helices of the 16S rRNA. Forms part of the Shine-Dalgarno cleft in the 70S ribosome. The protein is Small ribosomal subunit protein uS11 of Lacticaseibacillus casei (strain BL23) (Lactobacillus casei).